Here is a 410-residue protein sequence, read N- to C-terminus: Cysteine desulfurase IscS (410 aa).

Pyridoxal 5'-phosphate-binding positions include 80–81, asparagine 160, glutamine 188, and 208–210; these read AT and SGH. Lysine 211 carries the post-translational modification N6-(pyridoxal phosphate)lysine. Threonine 248 contributes to the pyridoxal 5'-phosphate binding site. Residue cysteine 334 is the Cysteine persulfide intermediate of the active site. Cysteine 334 is a binding site for [2Fe-2S] cluster.

It belongs to the class-V pyridoxal-phosphate-dependent aminotransferase family. NifS/IscS subfamily. Homodimer. Forms a heterotetramer with IscU, interacts with other sulfur acceptors. The cofactor is pyridoxal 5'-phosphate.

It localises to the cytoplasm. The catalysed reaction is (sulfur carrier)-H + L-cysteine = (sulfur carrier)-SH + L-alanine. It participates in cofactor biosynthesis; iron-sulfur cluster biosynthesis. Its function is as follows. Master enzyme that delivers sulfur to a number of partners involved in Fe-S cluster assembly, tRNA modification or cofactor biosynthesis. Catalyzes the removal of elemental sulfur atoms from cysteine to produce alanine. Functions as a sulfur delivery protein for Fe-S cluster synthesis onto IscU, an Fe-S scaffold assembly protein, as well as other S acceptor proteins. This is Cysteine desulfurase IscS from Rickettsia rickettsii (strain Iowa).